A 136-amino-acid chain; its full sequence is Cancer/testis antigen 62 (136 aa).

Residues 1 to 22 (MMHTTSYRRLSPPHLTDQPSAY) form a disordered region.

As to expression, testis specific. Expressed in cancer cell lines.

The polypeptide is Cancer/testis antigen 62 (CT62) (Homo sapiens (Human)).